Reading from the N-terminus, the 336-residue chain is Ketoreductase adrE (336 aa).

Residue Y171 coordinates NADP(+).

The protein belongs to the NAD(P)-dependent epimerase/dehydratase family. Dihydroflavonol-4-reductase subfamily.

It participates in secondary metabolite biosynthesis; terpenoid biosynthesis. Ketoreductase; part of the gene cluster that mediates the biosynthesis of andrastins, meroterpenoid compounds that exhibit inhibitory activity against ras farnesyltransferase, suggesting that they could be promising leads for antitumor agents. The first step of the pathway is the synthesis of 3,5-dimethylorsellinic acid (DMOA) by the polyketide synthase adrD via condensation of one acetyl-CoA starter unit with 3 malonyl-CoA units and 2 methylations. DMAO is then converted to farnesyl-DMAO by the prenyltransferase adrG. The methyltransferase adrK catalyzes the methylation of the carboxyl group of farnesyl-DMAO to farnesyl-DMAO methyl ester which is further converted to epoxyfarnesyl-DMAO methyl ester by the FAD-dependent monooxygenase adrH. The terpene cyclase adrI then catalyzes the carbon skeletal rearrangement to generate the andrastin E, the first compound in the pathway having the andrastin scaffold, with the tetracyclic ring system. The post-cyclization tailoring enzymes adrF, adrE, adrJ, and adrA, are involved in the conversion of andrastin E into andrastin A. The short chain dehydrogenase adrF is responsible for the oxidation of the C-3 a hydroxyl group of andrastin E to yield the corresponding ketone, andrastin D. The ketoreductase adrE stereoselectively reduces the carbonyl moiety to reverse the stereochemistry of the C-3 position to yield andrastin F. The acetyltransferase adrJ is the acetyltransferase that attaches the acetyl group to the C-3 hydroxyl group of andrastin F to yield andrastin C. Finally, the cytochrome P450 monooxygenase adrA catalyzes two sequential oxidation reactions of the C-23 methyl group, to generate the corresponding alcohol andrastin B, and aldehyde andrastin A. The sequence is that of Ketoreductase adrE from Penicillium rubens (strain ATCC 28089 / DSM 1075 / NRRL 1951 / Wisconsin 54-1255) (Penicillium chrysogenum).